The chain runs to 243 residues: Carboxy-S-adenosyl-L-methionine synthase (243 aa).

S-adenosyl-L-methionine contacts are provided by residues Tyr-40, 65-67 (GCS), 90-91 (DN), 118-119 (DI), Asn-133, and Arg-200.

Belongs to the class I-like SAM-binding methyltransferase superfamily. Cx-SAM synthase family. Homodimer.

It catalyses the reaction prephenate + S-adenosyl-L-methionine = carboxy-S-adenosyl-L-methionine + 3-phenylpyruvate + H2O. Catalyzes the conversion of S-adenosyl-L-methionine (SAM) to carboxy-S-adenosyl-L-methionine (Cx-SAM). In Shewanella piezotolerans (strain WP3 / JCM 13877), this protein is Carboxy-S-adenosyl-L-methionine synthase.